The chain runs to 86 residues: Small ribosomal subunit protein bS20 (86 aa).

This sequence belongs to the bacterial ribosomal protein bS20 family.

Functionally, binds directly to 16S ribosomal RNA. This is Small ribosomal subunit protein bS20 from Sulfurimonas denitrificans (strain ATCC 33889 / DSM 1251) (Thiomicrospira denitrificans (strain ATCC 33889 / DSM 1251)).